A 382-amino-acid chain; its full sequence is 2-epi-valiolone synthase (382 aa).

Residues E92–K95, G124–D128, T148–T149, K161, K170, and H188–T191 each bind NAD(+). Zn(2+) is bound by residues E203, H266, and H283.

Belongs to the sugar phosphate cyclases superfamily. EVS family. NAD(+) serves as cofactor. Requires Co(2+) as cofactor. It depends on Zn(2+) as a cofactor.

The enzyme catalyses D-sedoheptulose 7-phosphate = 2-epi-valiolone + phosphate. Functionally, catalyzes the conversion of sedoheptulose 7-phosphate to 2-epi-valiolone, which may serve as an alternative precursor for aminocyclitol biosynthesis. This Actinosynnema mirum (strain ATCC 29888 / DSM 43827 / JCM 3225 / NBRC 14064 / NCIMB 13271 / NRRL B-12336 / IMRU 3971 / 101) protein is 2-epi-valiolone synthase.